Reading from the N-terminus, the 427-residue chain is Glutamate-1-semialdehyde 2,1-aminomutase (427 aa).

An N6-(pyridoxal phosphate)lysine modification is found at Lys-265.

The protein belongs to the class-III pyridoxal-phosphate-dependent aminotransferase family. HemL subfamily. As to quaternary structure, homodimer. It depends on pyridoxal 5'-phosphate as a cofactor.

The protein resides in the cytoplasm. The enzyme catalyses (S)-4-amino-5-oxopentanoate = 5-aminolevulinate. Its pathway is porphyrin-containing compound metabolism; protoporphyrin-IX biosynthesis; 5-aminolevulinate from L-glutamyl-tRNA(Glu): step 2/2. The chain is Glutamate-1-semialdehyde 2,1-aminomutase from Burkholderia lata (strain ATCC 17760 / DSM 23089 / LMG 22485 / NCIMB 9086 / R18194 / 383).